A 408-amino-acid chain; its full sequence is tRNA-specific 2-thiouridylase MnmA (408 aa).

ATP-binding positions include 27-34 and L53; that span reads AMSGGVDS. The Nucleophile role is filled by C121. An intrachain disulfide couples C121 to C222. Position 145 (G145) interacts with ATP. An interaction with tRNA region spans residues 172-174; sequence RDQ. The active-site Cysteine persulfide intermediate is C222.

This sequence belongs to the MnmA/TRMU family.

The protein localises to the cytoplasm. The enzyme catalyses S-sulfanyl-L-cysteinyl-[protein] + uridine(34) in tRNA + AH2 + ATP = 2-thiouridine(34) in tRNA + L-cysteinyl-[protein] + A + AMP + diphosphate + H(+). Functionally, catalyzes the 2-thiolation of uridine at the wobble position (U34) of tRNA, leading to the formation of s(2)U34. The sequence is that of tRNA-specific 2-thiouridylase MnmA from Rhizobium johnstonii (strain DSM 114642 / LMG 32736 / 3841) (Rhizobium leguminosarum bv. viciae).